Here is a 493-residue protein sequence, read N- to C-terminus: Glutamyl-tRNA(Gln) amidotransferase subunit A (493 aa).

Residues lysine 79 and serine 159 each act as charge relay system in the active site. Catalysis depends on serine 183, which acts as the Acyl-ester intermediate.

It belongs to the amidase family. GatA subfamily. In terms of assembly, heterotrimer of A, B and C subunits.

The catalysed reaction is L-glutamyl-tRNA(Gln) + L-glutamine + ATP + H2O = L-glutaminyl-tRNA(Gln) + L-glutamate + ADP + phosphate + H(+). Its function is as follows. Allows the formation of correctly charged Gln-tRNA(Gln) through the transamidation of misacylated Glu-tRNA(Gln) in organisms which lack glutaminyl-tRNA synthetase. The reaction takes place in the presence of glutamine and ATP through an activated gamma-phospho-Glu-tRNA(Gln). The protein is Glutamyl-tRNA(Gln) amidotransferase subunit A of Sinorhizobium medicae (strain WSM419) (Ensifer medicae).